Here is a 513-residue protein sequence, read N- to C-terminus: Nitrogenase molybdenum-iron protein beta chain (513 aa).

Positions 70, 95, and 153 each coordinate [8Fe-7S] cluster.

The protein belongs to the NifD/NifK/NifE/NifN family. In terms of assembly, tetramer of two alpha and two beta chains. Forms complex with the iron protein (nitrogenase component 2). The cofactor is [8Fe-7S] cluster.

The catalysed reaction is N2 + 8 reduced [2Fe-2S]-[ferredoxin] + 16 ATP + 16 H2O = H2 + 8 oxidized [2Fe-2S]-[ferredoxin] + 2 NH4(+) + 16 ADP + 16 phosphate + 6 H(+). In terms of biological role, this molybdenum-iron protein is part of the nitrogenase complex that catalyzes the key enzymatic reactions in nitrogen fixation. The sequence is that of Nitrogenase molybdenum-iron protein beta chain (nifK1) from Sinorhizobium fredii (strain NBRC 101917 / NGR234).